The chain runs to 468 residues: Glutamate--tRNA ligase (468 aa).

The 'HIGH' region signature appears at 12 to 22; the sequence is PSPTGFIHLGN. The short motif at 244-248 is the 'KMSKS' region element; that stretch reads KMSKR. Lysine 247 contributes to the ATP binding site.

Belongs to the class-I aminoacyl-tRNA synthetase family. Glutamate--tRNA ligase type 1 subfamily. As to quaternary structure, monomer.

The protein localises to the cytoplasm. It carries out the reaction tRNA(Glu) + L-glutamate + ATP = L-glutamyl-tRNA(Glu) + AMP + diphosphate. In terms of biological role, catalyzes the attachment of glutamate to tRNA(Glu) in a two-step reaction: glutamate is first activated by ATP to form Glu-AMP and then transferred to the acceptor end of tRNA(Glu). The protein is Glutamate--tRNA ligase of Polynucleobacter asymbioticus (strain DSM 18221 / CIP 109841 / QLW-P1DMWA-1) (Polynucleobacter necessarius subsp. asymbioticus).